Here is a 507-residue protein sequence, read N- to C-terminus: GMP synthase [glutamine-hydrolyzing] 1 (507 aa).

Residues 4-193 (KIIILDFGSQ…VVDVCGCKQD (190 aa)) enclose the Glutamine amidotransferase type-1 domain. Residue C79 is the Nucleophile of the active site. Catalysis depends on residues H167 and E169. The 189-residue stretch at 194-382 (WSPASFIEST…LGMPEHLITR (189 aa)) folds into the GMPS ATP-PPase domain. ATP is bound at residue 221–227 (SGGVDSS).

Homodimer.

It catalyses the reaction XMP + L-glutamine + ATP + H2O = GMP + L-glutamate + AMP + diphosphate + 2 H(+). The protein operates within purine metabolism; GMP biosynthesis; GMP from XMP (L-Gln route): step 1/1. Its function is as follows. Catalyzes the synthesis of GMP from XMP. This is GMP synthase [glutamine-hydrolyzing] 1 (guaA1) from Bacteroides thetaiotaomicron (strain ATCC 29148 / DSM 2079 / JCM 5827 / CCUG 10774 / NCTC 10582 / VPI-5482 / E50).